The chain runs to 208 residues: Holliday junction branch migration complex subunit RuvA (208 aa).

The segment at 1–64 is domain I; that stretch reads MIGRLHGTVA…DDGQALYGFA (64 aa). The domain II stretch occupies residues 65 to 143; that stretch reads SRAERDLFRV…GLLPAASGGV (79 aa). The interval 139–162 is disordered; sequence ASGGVPARTGSGEQLDAPAGPQGS. Residues 144 to 157 are flexible linker; it reads PARTGSGEQLDAPA. The interval 158-208 is domain III; it reads GPQGSREDAVSALVALGYKPAEAGRLVNAVPGANDLPSEELIRRALQAAVR.

This sequence belongs to the RuvA family. As to quaternary structure, homotetramer. Forms an RuvA(8)-RuvB(12)-Holliday junction (HJ) complex. HJ DNA is sandwiched between 2 RuvA tetramers; dsDNA enters through RuvA and exits via RuvB. An RuvB hexamer assembles on each DNA strand where it exits the tetramer. Each RuvB hexamer is contacted by two RuvA subunits (via domain III) on 2 adjacent RuvB subunits; this complex drives branch migration. In the full resolvosome a probable DNA-RuvA(4)-RuvB(12)-RuvC(2) complex forms which resolves the HJ.

It localises to the cytoplasm. Its function is as follows. The RuvA-RuvB-RuvC complex processes Holliday junction (HJ) DNA during genetic recombination and DNA repair, while the RuvA-RuvB complex plays an important role in the rescue of blocked DNA replication forks via replication fork reversal (RFR). RuvA specifically binds to HJ cruciform DNA, conferring on it an open structure. The RuvB hexamer acts as an ATP-dependent pump, pulling dsDNA into and through the RuvAB complex. HJ branch migration allows RuvC to scan DNA until it finds its consensus sequence, where it cleaves and resolves the cruciform DNA. The protein is Holliday junction branch migration complex subunit RuvA of Alkalilimnicola ehrlichii (strain ATCC BAA-1101 / DSM 17681 / MLHE-1).